The primary structure comprises 261 residues: Segregation and condensation protein A (261 aa).

The protein belongs to the ScpA family. In terms of assembly, component of a cohesin-like complex composed of ScpA, ScpB and the Smc homodimer, in which ScpA and ScpB bind to the head domain of Smc. The presence of the three proteins is required for the association of the complex with DNA.

The protein resides in the cytoplasm. In terms of biological role, participates in chromosomal partition during cell division. May act via the formation of a condensin-like complex containing Smc and ScpB that pull DNA away from mid-cell into both cell halves. This is Segregation and condensation protein A from Desulfitobacterium hafniense (strain DSM 10664 / DCB-2).